Consider the following 510-residue polypeptide: NAD(P)H-quinone oxidoreductase subunit 2 B, chloroplastic (510 aa).

The next 13 membrane-spanning stretches (helical) occupy residues 24-44, 59-79, 99-119, 124-144, 149-169, 184-204, 229-249, 262-284, 295-315, 323-343, 354-374, 395-415, and 418-438; these read LLLFNGSFILPECILIFGLIL, WFYFISSTSLVMSITALLFRW, IFQFLILLCSTLCIPLSVEYI, MAITEFLLFILTATLGGMFLC, LITIFVALECFSLCSYLLSGY, LLMGGASSSILVHGFSWLYGL, ISIALIFITVGIGFKLSLAPF, TPVVAFLSVTSKVAASALATRIF, WHLLLEILAILSMILGNLIAI, MLAYSSIGQIGYVIIGIIVGD, YMLFYIAMNLGTFARIVLFGL, ALSLALCLLSLGGLPPLAGFF, and LHLFWCGWQAGLYFLVSIGLL.

The protein belongs to the complex I subunit 2 family. As to quaternary structure, NDH is composed of at least 16 different subunits, 5 of which are encoded in the nucleus.

Its subcellular location is the plastid. It localises to the chloroplast thylakoid membrane. It carries out the reaction a plastoquinone + NADH + (n+1) H(+)(in) = a plastoquinol + NAD(+) + n H(+)(out). It catalyses the reaction a plastoquinone + NADPH + (n+1) H(+)(in) = a plastoquinol + NADP(+) + n H(+)(out). NDH shuttles electrons from NAD(P)H:plastoquinone, via FMN and iron-sulfur (Fe-S) centers, to quinones in the photosynthetic chain and possibly in a chloroplast respiratory chain. The immediate electron acceptor for the enzyme in this species is believed to be plastoquinone. Couples the redox reaction to proton translocation, and thus conserves the redox energy in a proton gradient. This chain is NAD(P)H-quinone oxidoreductase subunit 2 B, chloroplastic, found in Lemna minor (Common duckweed).